The chain runs to 550 residues: Hydroxylamine reductase (550 aa).

[2Fe-2S] cluster is bound by residues cysteine 3, cysteine 6, cysteine 18, and cysteine 25. The hybrid [4Fe-2O-2S] cluster site is built by histidine 249, glutamate 273, cysteine 317, cysteine 405, cysteine 433, cysteine 458, glutamate 492, and lysine 494. Cysteine 405 bears the Cysteine persulfide mark.

It belongs to the HCP family. The cofactor is [2Fe-2S] cluster. Requires hybrid [4Fe-2O-2S] cluster as cofactor.

Its subcellular location is the cytoplasm. It carries out the reaction A + NH4(+) + H2O = hydroxylamine + AH2 + H(+). Its function is as follows. Catalyzes the reduction of hydroxylamine to form NH(3) and H(2)O. The protein is Hydroxylamine reductase of Shigella boydii serotype 18 (strain CDC 3083-94 / BS512).